The primary structure comprises 119 residues: Large ribosomal subunit protein bL20 (119 aa).

Belongs to the bacterial ribosomal protein bL20 family.

In terms of biological role, binds directly to 23S ribosomal RNA and is necessary for the in vitro assembly process of the 50S ribosomal subunit. It is not involved in the protein synthesizing functions of that subunit. This Acinetobacter baumannii (strain SDF) protein is Large ribosomal subunit protein bL20.